The primary structure comprises 223 residues: 2-C-methyl-D-erythritol 4-phosphate cytidylyltransferase (223 aa).

This sequence belongs to the IspD/TarI cytidylyltransferase family. IspD subfamily.

It carries out the reaction 2-C-methyl-D-erythritol 4-phosphate + CTP + H(+) = 4-CDP-2-C-methyl-D-erythritol + diphosphate. It participates in isoprenoid biosynthesis; isopentenyl diphosphate biosynthesis via DXP pathway; isopentenyl diphosphate from 1-deoxy-D-xylulose 5-phosphate: step 2/6. Catalyzes the formation of 4-diphosphocytidyl-2-C-methyl-D-erythritol from CTP and 2-C-methyl-D-erythritol 4-phosphate (MEP). This is 2-C-methyl-D-erythritol 4-phosphate cytidylyltransferase from Synechococcus sp. (strain WH7803).